The chain runs to 231 residues: Ion-translocating oxidoreductase complex subunit E (231 aa).

Helical transmembrane passes span 18–38 (ALVQ…ATNA), 39–59 (LGLG…ISTL), 63–83 (TPAE…VSAV), 86–106 (LINA…PLIV), 125–145 (ALSA…MFVL), and 182–202 (PFLL…MLAG).

Belongs to the NqrDE/RnfAE family. The complex is composed of six subunits: RsxA, RsxB, RsxC, RsxD, RsxE and RsxG.

It localises to the cell inner membrane. In terms of biological role, part of a membrane-bound complex that couples electron transfer with translocation of ions across the membrane. Required to maintain the reduced state of SoxR. This is Ion-translocating oxidoreductase complex subunit E from Escherichia coli (strain SE11).